A 117-amino-acid chain; its full sequence is Appetite-regulating hormone (117 aa).

The N-terminal stretch at 1-23 (MVSSATICSLLLLSMLWMDMAMA) is a signal peptide. Serine 26 is lipidated: O-decanoyl serine; alternate. Serine 26 is lipidated: O-hexanoyl serine; alternate. A lipid anchor (O-octanoyl serine; alternate) is attached at serine 26. Residues 28–68 (LSPEHQKAQQRKESKKPPAKLQPRALEGWLHPEDRGQAEEA) form a disordered region. Residues 31 to 43 (EHQKAQQRKESKK) show a composition bias toward basic and acidic residues. The propeptide at 52-75 (ALEGWLHPEDRGQAEEAEEELEIR) is removed in mature form. Leucine 98 bears the Leucine amide mark. Positions 99-117 (GKFLQDILWEEVKEAPANK) are cleaved as a propeptide — removed in mature form.

It belongs to the motilin family. O-octanoylated by GOAT/MBOAT4. O-octanoylation is essential for ghrelin activity. The replacement of Ser-26 by aromatic tryptophan preserves ghrelin activity. Post-translationally, amidation of Leu-98 is essential for obestatin activity. Ghrelin is broadly expressed with higher expression in the stomach. Very low levels are detected in the hypothalamus, heart, lung, pancreas, intestine and adipose tissue. Obestatin is most highly expressed in jejunum, and also found in duodenum, stomach, pituitary, ileum, liver, hypothalamus and heart. Expressed in low levels in pancreas, cerebellum, cerebrum, kidney, testis, ovary colon and lung.

Its subcellular location is the secreted. In terms of biological role, ghrelin is the ligand for growth hormone secretagogue receptor type 1 (GHSR). Induces the release of growth hormone from the pituitary. Has an appetite-stimulating effect, induces adiposity and stimulates gastric acid secretion. Involved in growth regulation. Its function is as follows. Obestatin may be the ligand for GPR39. May have an appetite-reducing effect resulting in decreased food intake. May reduce gastric emptying activity and jejunal motility. This Rattus norvegicus (Rat) protein is Appetite-regulating hormone (Ghrl).